Consider the following 706-residue polypeptide: B-cell lymphoma 6 protein (706 aa).

Residues 32–99 enclose the BTB domain; the sequence is TDVVIVVSRE…MYTSRLNLRE (68 aa). Positions 317–349 are disordered; the sequence is EPPNAPLNRKGLVSPQSPQKSDCQPNSPTESCS. Polar residues predominate over residues 330-349; it reads SPQSPQKSDCQPNSPTESCS. Phosphoserine; by MAPK1 is present on residues S333 and S343. S361 carries the phosphoserine modification. The interval 376–379 is required for interaction with NuRD complex and for transcriptional repressor activity; that stretch reads KKYK. N6-acetyllysine is present on K379. S404 carries the post-translational modification Phosphoserine. The segment at 407 to 467 is disordered; that stretch reads AYTAPPACQP…PRSSSESHSP (61 aa). The span at 424–456 shows a compositional bias: polar residues; that stretch reads DLQSPTKLSASGEDSTIPQASRLNNIVNRSMTG. Low complexity predominate over residues 457 to 466; the sequence is SPRSSSESHS. C2H2-type zinc fingers lie at residues 518–541, 546–568, 574–596, 602–624, 630–652, and 658–681; these read FFCNECDCRFSEEASLKRHTLQTH, YKCDRCQASFRYKGNLASHKTVH, YRCNICGAQFNRPANLKTHTRIH, YKCETCGARFVQVAHLRAHVLIH, YPCEICGTRFRHLQTLKSHLRIH, and YHCEKCNLHFRHKSQLRLHLRQKH.

As to quaternary structure, homodimer. Interacts (via BTB domain) with the corepressors BCOR, NCOR1 and SMRT/NCOR2; the interactions are direct. Forms preferably ternary complexes with BCOR and SMRT/NCOR2 on target gene promoters but, on enhancer elements, interacts with SMRT/NCOR2 and HDAC3 to repress proximal gene expression. Interacts with histone deacetylases HDAC2, HDAC5 and HDAC9 (via the catalytic domain). Interacts with ZBTB7 and BCL6B. Interacts with SCF(FBXO11) complex; the interaction is independent of phosphorylation and promotes ubiquitination. Interacts (when phosphorylated) with PIN1; the interaction is required for BCL6 degradation upon genotoxic stress. Interacts with ZBTB17; inhibits ZBTB17 transcriptional activity. Interacts with CTBP1, autoinhibits its transcriptional expression. Interacts with NOTCH1 NCID and SIRT1; leads to a epigenetic repression of selective NOTCH1-target genes. Interacts (nor via BTB domain neither acetylated) with the NuRD complex components CHD4, HDAC1, MBD3 and MTA3; the interaction with MTA3 inhibits BCL6 acetylation and is required for BCL6 transpriptional repression. Post-translationally, phosphorylated by MAPK1 in response to antigen receptor activation at Ser-333 and Ser-343. Phosphorylated by ATM in response to genotoxic stress. Phosphorylation induces its degradation by ubiquitin/proteasome pathway. Polyubiquitinated. Polyubiquitinated by SCF(FBXO11), leading to its degradation by the proteasome. Ubiquitinated by the SCF(FBXL17) complex, leading to its degradation by the proteasome: ubiquitination by the SCF(FBXL17) complex takes place when aberrant BTB domain dimers are formed. In terms of processing, acetylated at Lys-379 by EP300 which inhibits the interaction with NuRD complex and the transcriptional repressor function. Deacetylated by HDAC- and SIR2-dependent pathways. As to expression, expressed in germinal center T- and B-cells and in primary immature dendritic cells.

It localises to the nucleus. Its function is as follows. Transcriptional repressor mainly required for germinal center (GC) formation and antibody affinity maturation which has different mechanisms of action specific to the lineage and biological functions. Forms complexes with different corepressors and histone deacetylases to repress the transcriptional expression of different subsets of target genes. Represses its target genes by binding directly to the DNA sequence 5'-TTCCTAGAA-3' (BCL6-binding site) or indirectly by repressing the transcriptional activity of transcription factors. In GC B-cells, represses genes that function in differentiation, inflammation, apoptosis and cell cycle control, also autoregulates its transcriptional expression and up-regulates, indirectly, the expression of some genes important for GC reactions, such as AICDA, through the repression of microRNAs expression, like miR155. An important function is to allow GC B-cells to proliferate very rapidly in response to T-cell dependent antigens and tolerate the physiological DNA breaks required for immunglobulin class switch recombination and somatic hypermutation without inducing a p53/TP53-dependent apoptotic response. In follicular helper CD4(+) T-cells (T(FH) cells), promotes the expression of T(FH)-related genes but inhibits the differentiation of T(H)1, T(H)2 and T(H)17 cells. Also required for the establishment and maintenance of immunological memory for both T- and B-cells. Suppresses macrophage proliferation through competition with STAT5 for STAT-binding motifs binding on certain target genes, such as CCL2 and CCND2. In response to genotoxic stress, controls cell cycle arrest in GC B-cells in both p53/TP53-dependedent and -independent manners. Besides, also controls neurogenesis through the alteration of the composition of NOTCH-dependent transcriptional complexes at selective NOTCH targets, such as HES5, including the recruitment of the deacetylase SIRT1 and resulting in an epigenetic silencing leading to neuronal differentiation. This is B-cell lymphoma 6 protein (BCL6) from Homo sapiens (Human).